A 118-amino-acid chain; its full sequence is Basic phospholipase A2 CM-II (118 aa).

7 disulfide bridges follow: C11/C70, C26/C117, C28/C44, C43/C98, C50/C91, C59/C84, and C77/C89. Ca(2+) is bound by residues Y27, G29, and G31. Residue H47 is part of the active site. Position 48 (D48) interacts with Ca(2+). Residue D92 is part of the active site.

The protein belongs to the phospholipase A2 family. Group I subfamily. D49 sub-subfamily. Requires Ca(2+) as cofactor. As to expression, expressed by the venom gland.

The protein resides in the secreted. The catalysed reaction is a 1,2-diacyl-sn-glycero-3-phosphocholine + H2O = a 1-acyl-sn-glycero-3-phosphocholine + a fatty acid + H(+). Functionally, snake venom phospholipase A2 (PLA2) that causes myonecrosis when injected intramuscularly, causes neuromuscular blockade with a gradual contracture and a decreased sensitivity to ACh and KCl (in the chick biventer cervicis nerve-muscle preparation), abolishes twitches evoked by indirect stimulation earlier than those by direct stimulation (in the mouse phrenic nerve-diaphragm preparation), shows indirect hemolytic activity, and shows weak anticoagulant activity. PLA2 catalyzes the calcium-dependent hydrolysis of the 2-acyl groups in 3-sn-phosphoglycerides. The protein is Basic phospholipase A2 CM-II of Naja mossambica (Mozambique spitting cobra).